Reading from the N-terminus, the 301-residue chain is Bifunctional dTDP-4-dehydrorhamnose 3,5-epimerase/dTDP-4-dehydrorhamnose reductase (301 aa).

Residues 23–24 (WI), 69–71 (GVT), and Tyr-111 each bind NADPH.

Belongs to the dTDP-4-dehydrorhamnose reductase family. As to expression, expressed in roots, leaves, stems and flowers.

The catalysed reaction is dTDP-4-dehydro-6-deoxy-alpha-D-glucose = dTDP-4-dehydro-beta-L-rhamnose. It carries out the reaction dTDP-beta-L-rhamnose + NADP(+) = dTDP-4-dehydro-beta-L-rhamnose + NADPH + H(+). The protein operates within carbohydrate biosynthesis; dTDP-L-rhamnose biosynthesis. In terms of biological role, bifunctional enzyme involved in dTDP-beta-L-rhamnose biosynthesis. Catalyzes the epimerization of the C3' and C5'positions of dTDP-6-deoxy-4-keto-alpha-D-glucose to form dTDP-4-keto-beta-L-rhamnose and its reduction to yield dTDP-beta-L-rhamnose. Can form UDP-beta-L-rhamnose from UDP-6-deoxy-4-keto-alpha-D-glucose, but cannot convert GDP-4-dehydro-6-deoxy-D-mannose to GDP-fucose. This Arabidopsis thaliana (Mouse-ear cress) protein is Bifunctional dTDP-4-dehydrorhamnose 3,5-epimerase/dTDP-4-dehydrorhamnose reductase.